A 92-amino-acid polypeptide reads, in one-letter code: Small ribosomal subunit protein bS20 (92 aa).

The tract at residues 1–23 is disordered; sequence MANSPSAKKRAKQAEKRRSHNAS. Residues 7–20 are compositionally biased toward basic residues; it reads AKKRAKQAEKRRSH.

It belongs to the bacterial ribosomal protein bS20 family.

Functionally, binds directly to 16S ribosomal RNA. The sequence is that of Small ribosomal subunit protein bS20 from Pseudomonas fluorescens (strain ATCC BAA-477 / NRRL B-23932 / Pf-5).